Consider the following 404-residue polypeptide: Probable tRNA sulfurtransferase (404 aa).

Residues 60–165 (QPIVEALKLV…DEAAYISYEE (106 aa)) form the THUMP domain. Residues 183–184 (ML), 208–209 (HF), Arg265, Gly287, and Gln296 each bind ATP.

The protein belongs to the ThiI family.

It is found in the cytoplasm. The enzyme catalyses [ThiI sulfur-carrier protein]-S-sulfanyl-L-cysteine + a uridine in tRNA + 2 reduced [2Fe-2S]-[ferredoxin] + ATP + H(+) = [ThiI sulfur-carrier protein]-L-cysteine + a 4-thiouridine in tRNA + 2 oxidized [2Fe-2S]-[ferredoxin] + AMP + diphosphate. The catalysed reaction is [ThiS sulfur-carrier protein]-C-terminal Gly-Gly-AMP + S-sulfanyl-L-cysteinyl-[cysteine desulfurase] + AH2 = [ThiS sulfur-carrier protein]-C-terminal-Gly-aminoethanethioate + L-cysteinyl-[cysteine desulfurase] + A + AMP + 2 H(+). Its pathway is cofactor biosynthesis; thiamine diphosphate biosynthesis. Functionally, catalyzes the ATP-dependent transfer of a sulfur to tRNA to produce 4-thiouridine in position 8 of tRNAs, which functions as a near-UV photosensor. Also catalyzes the transfer of sulfur to the sulfur carrier protein ThiS, forming ThiS-thiocarboxylate. This is a step in the synthesis of thiazole, in the thiamine biosynthesis pathway. The sulfur is donated as persulfide by IscS. The polypeptide is Probable tRNA sulfurtransferase (Streptococcus pyogenes serotype M1).